A 254-amino-acid chain; its full sequence is Alcohol dehydrogenase (254 aa).

Residue 10–33 (FVAGLGGIGLDTSREIVKSGPKNL) coordinates NAD(+). Serine 138 provides a ligand contact to substrate. Residue tyrosine 151 is the Proton acceptor of the active site.

The protein belongs to the short-chain dehydrogenases/reductases (SDR) family. As to quaternary structure, homodimer.

The catalysed reaction is a primary alcohol + NAD(+) = an aldehyde + NADH + H(+). It catalyses the reaction a secondary alcohol + NAD(+) = a ketone + NADH + H(+). The chain is Alcohol dehydrogenase (Adh) from Drosophila differens (Fruit fly).